Consider the following 310-residue polypeptide: tRNA dimethylallyltransferase (310 aa).

10-17 (GPTAVGKS) provides a ligand contact to ATP. Position 12–17 (12–17 (TAVGKS)) interacts with substrate. Residues 35–38 (DSMQ) are interaction with substrate tRNA.

It belongs to the IPP transferase family. In terms of assembly, monomer. It depends on Mg(2+) as a cofactor.

The enzyme catalyses adenosine(37) in tRNA + dimethylallyl diphosphate = N(6)-dimethylallyladenosine(37) in tRNA + diphosphate. Its function is as follows. Catalyzes the transfer of a dimethylallyl group onto the adenine at position 37 in tRNAs that read codons beginning with uridine, leading to the formation of N6-(dimethylallyl)adenosine (i(6)A). This Clostridium perfringens (strain SM101 / Type A) protein is tRNA dimethylallyltransferase.